We begin with the raw amino-acid sequence, 65 residues long: Large ribosomal subunit protein bL28 (65 aa).

The tract at residues 1-21 (MPGRDQLTGQKALSGNKRSHA) is disordered.

It belongs to the bacterial ribosomal protein bL28 family.

In Metamycoplasma arthritidis (strain 158L3-1) (Mycoplasma arthritidis), this protein is Large ribosomal subunit protein bL28.